The chain runs to 265 residues: Homeobox protein CDX-1 (265 aa).

The tract at residues 9-153 (KDSPVYPGPA…GGGGSGKTRT (145 aa)) is disordered. Positions 30–42 (YGPPAPPPAPPQY) are enriched in pro residues. Over residues 73-92 (AAAYGPGPAAPAASPASLAF) the composition is skewed to low complexity. Pro residues predominate over residues 93-108 (GPPPDFSPVPAPPGPG). Positions 110–126 (GLLAQPLGGPGTPSSPG) are enriched in low complexity. Positions 154–213 (KDKYRVVYTDHQRLELEKEFHYSRYITIRRKSELAANLGLTERQVKIWFQNRRAKERKVN) form a DNA-binding region, homeobox. Residues 157 to 178 (YRVVYTDHQRLELEKEFHYSRY) form an interaction with DNA region. The segment at 196-207 (RQVKIWFQNRRA) is interaction with 5-mCpG DNA. A compositionally biased stretch (basic residues) spans 207–217 (AKERKVNKKKQ). Residues 207–265 (AKERKVNKKKQQQQQPPQPPMAHDITATPAGPSLGGLCPSNTSLLATSSPMPVKEEFLP) are disordered. The segment covering 245-256 (PSNTSLLATSSP) has biased composition (polar residues).

This sequence belongs to the Caudal homeobox family. As to expression, intestinal epithelium.

The protein localises to the nucleus. Plays a role in transcriptional regulation. Involved in activated KRAS-mediated transcriptional activation of PRKD1 in colorectal cancer (CRC) cells. Binds to the PRKD1 promoter in colorectal cancer (CRC) cells. Could play a role in the terminal differentiation of the intestine. Binds preferentially to methylated DNA. This Homo sapiens (Human) protein is Homeobox protein CDX-1 (CDX1).